Reading from the N-terminus, the 351-residue chain is 3-dehydroquinate synthase (351 aa).

Residues 60–65 (DGEEYK), 94–98 (GVISD), 118–119 (TT), Lys-131, Lys-140, and 158–161 (FLKT) each bind NAD(+). The Zn(2+) site is built by Glu-173, His-239, and His-256.

This sequence belongs to the sugar phosphate cyclases superfamily. Dehydroquinate synthase family. Requires Co(2+) as cofactor. It depends on Zn(2+) as a cofactor. The cofactor is NAD(+).

The protein resides in the cytoplasm. The catalysed reaction is 7-phospho-2-dehydro-3-deoxy-D-arabino-heptonate = 3-dehydroquinate + phosphate. It functions in the pathway metabolic intermediate biosynthesis; chorismate biosynthesis; chorismate from D-erythrose 4-phosphate and phosphoenolpyruvate: step 2/7. Catalyzes the conversion of 3-deoxy-D-arabino-heptulosonate 7-phosphate (DAHP) to dehydroquinate (DHQ). The chain is 3-dehydroquinate synthase from Campylobacter jejuni subsp. doylei (strain ATCC BAA-1458 / RM4099 / 269.97).